The sequence spans 1083 residues: Ubiquitin carboxyl-terminal hydrolase 1 (1083 aa).

The UBP-type zinc finger occupies 30–165 (RSCVHFDKYV…KKDLLLEVVK (136 aa)). Residues C32, H34, C56, C59, C95, C98, C103, H115, H119, H125, C139, and C142 each contribute to the Zn(2+) site. Residues 202-1083 (RGLVNLGNTC…EAYILFYERI (882 aa)) form the USP domain. The active-site Nucleophile is the C211. Disordered regions lie at residues 387–424 (KDSE…DNET) and 450–486 (GSTE…ASGI). Basic and acidic residues-rich tracts occupy residues 409–419 (SDHKIQSRPET) and 455–473 (LMHD…EDVR). Over residues 474-485 (ATQSNEETSASG) the composition is skewed to polar residues. Residue H1029 is the Proton acceptor of the active site.

This sequence belongs to the peptidase C19 family.

It carries out the reaction Thiol-dependent hydrolysis of ester, thioester, amide, peptide and isopeptide bonds formed by the C-terminal Gly of ubiquitin (a 76-residue protein attached to proteins as an intracellular targeting signal).. Its function is as follows. Recognizes and hydrolyzes the peptide bond at the C-terminal Gly of ubiquitin. Involved in the processing of poly-ubiquitin precursors as well as that of ubiquitinated proteins. Is involved in resistance to the arginine analog canavanine (CAN). The protein is Ubiquitin carboxyl-terminal hydrolase 1 (UBP1) of Arabidopsis thaliana (Mouse-ear cress).